A 261-amino-acid chain; its full sequence is tRNA pseudouridine synthase A (261 aa).

Aspartate 51 functions as the Nucleophile in the catalytic mechanism. A substrate-binding site is contributed by tyrosine 109.

Belongs to the tRNA pseudouridine synthase TruA family. As to quaternary structure, homodimer.

The enzyme catalyses uridine(38/39/40) in tRNA = pseudouridine(38/39/40) in tRNA. Formation of pseudouridine at positions 38, 39 and 40 in the anticodon stem and loop of transfer RNAs. The sequence is that of tRNA pseudouridine synthase A from Shewanella sp. (strain MR-4).